The sequence spans 545 residues: Chaperonin GroEL 2 (545 aa).

Residues 29–32, 86–90, G413, 479–481, and D495 each bind ATP; these read TLGP, DGTTT, and NAA.

The protein belongs to the chaperonin (HSP60) family. In terms of assembly, forms a cylinder of 14 subunits composed of two heptameric rings stacked back-to-back. Interacts with the co-chaperonin GroES.

The protein resides in the cytoplasm. It carries out the reaction ATP + H2O + a folded polypeptide = ADP + phosphate + an unfolded polypeptide.. Functionally, together with its co-chaperonin GroES, plays an essential role in assisting protein folding. The GroEL-GroES system forms a nano-cage that allows encapsulation of the non-native substrate proteins and provides a physical environment optimized to promote and accelerate protein folding. This Prochlorococcus marinus (strain MIT 9215) protein is Chaperonin GroEL 2.